The sequence spans 121 residues: LENSTSLLSDPPVAAAVVSHFNDCPDSHTQFCFHGTCRFLVQEDRPACVCHSGYVGARCEHADLLAVVAASQKKQAITALVVVSIVALAVLIITCVLIHCCQVRKHCEWCRALICRHEKPS.

Leu1 is a signal peptide. Positions 2-16 (ENSTSLLSDPPVAAA) are cleaved as a propeptide — removed in mature form. Topologically, residues 2–75 (ENSTSLLSDP…AVVAASQKKQ (74 aa)) are extracellular. Asn3 is a glycosylation site (N-linked (GlcNAc...) asparagine). One can recognise an EGF-like domain in the interval 20 to 60 (HFNDCPDSHTQFCFHGTCRFLVQEDRPACVCHSGYVGARCE). Disulfide bonds link Cys24–Cys37, Cys32–Cys48, and Cys50–Cys59. Residues 67 to 121 (VVAASQKKQAITALVVVSIVALAVLIITCVLIHCCQVRKHCEWCRALICRHEKPS) constitute a propeptide, removed in mature form. The chain crosses the membrane as a helical span at residues 76 to 101 (AITALVVVSIVALAVLIITCVLIHCC).

As to quaternary structure, interacts with the PDZ domains of MAGI3, SDCBP and SNTA1. The interaction with SDCBP, is required for the targeting to the cell surface. In the endoplasmic reticulum, in its immature form (i.e. with a prosegment and lacking full N-glycosylation), interacts with CNIH. In the Golgi apparatus, may form a complex with CNIH and GORASP2. Interacts (via cytoplasmic C-terminal domain) with NKD2. Hypothalamus.

The protein localises to the secreted. It localises to the extracellular space. The protein resides in the cell membrane. In terms of biological role, TGF alpha is a mitogenic polypeptide that is able to bind to the EGF receptor/EGFR and to act synergistically with TGF beta to promote anchorage-independent cell proliferation in soft agar. In Macaca mulatta (Rhesus macaque), this protein is Protransforming growth factor alpha (TGFA).